A 434-amino-acid chain; its full sequence is Glutamate-1-semialdehyde 2,1-aminomutase (434 aa).

An N6-(pyridoxal phosphate)lysine modification is found at K274.

It belongs to the class-III pyridoxal-phosphate-dependent aminotransferase family. HemL subfamily. As to quaternary structure, homodimer. It depends on pyridoxal 5'-phosphate as a cofactor.

It localises to the cytoplasm. It carries out the reaction (S)-4-amino-5-oxopentanoate = 5-aminolevulinate. The protein operates within porphyrin-containing compound metabolism; protoporphyrin-IX biosynthesis; 5-aminolevulinate from L-glutamyl-tRNA(Glu): step 2/2. The polypeptide is Glutamate-1-semialdehyde 2,1-aminomutase (Acidovorax sp. (strain JS42)).